A 511-amino-acid polypeptide reads, in one-letter code: Alpha-amylase 2B (511 aa).

Residues 1-15 form the signal peptide; that stretch reads MKFFLLLFTIGFCWA. A Pyrrolidone carboxylic acid modification is found at Gln16. Intrachain disulfides connect Cys43/Cys101, Cys85/Cys130, and Cys156/Cys175. Residues Asn115, Arg173, and Asp182 each contribute to the Ca(2+) site. Arg210 is a binding site for chloride. Asp212 acts as the Nucleophile in catalysis. His216 is a Ca(2+) binding site. Catalysis depends on Glu248, which acts as the Proton donor. The chloride site is built by Asn313 and Arg352. 2 cysteine pairs are disulfide-bonded: Cys393/Cys399 and Cys465/Cys477.

The protein belongs to the glycosyl hydrolase 13 family. As to quaternary structure, monomer. Requires Ca(2+) as cofactor. The cofactor is chloride.

The protein resides in the secreted. It catalyses the reaction Endohydrolysis of (1-&gt;4)-alpha-D-glucosidic linkages in polysaccharides containing three or more (1-&gt;4)-alpha-linked D-glucose units.. This is Alpha-amylase 2B (AMY2B) from Homo sapiens (Human).